Consider the following 301-residue polypeptide: Acetylglutamate kinase (301 aa).

Substrate contacts are provided by residues 68-69 (GG), Arg-90, and Asn-197.

Belongs to the acetylglutamate kinase family. ArgB subfamily.

Its subcellular location is the cytoplasm. It carries out the reaction N-acetyl-L-glutamate + ATP = N-acetyl-L-glutamyl 5-phosphate + ADP. Its pathway is amino-acid biosynthesis; L-arginine biosynthesis; N(2)-acetyl-L-ornithine from L-glutamate: step 2/4. Functionally, catalyzes the ATP-dependent phosphorylation of N-acetyl-L-glutamate. This is Acetylglutamate kinase from Nitrosococcus oceani (strain ATCC 19707 / BCRC 17464 / JCM 30415 / NCIMB 11848 / C-107).